Reading from the N-terminus, the 332-residue chain is Phosphate acyltransferase (332 aa).

This sequence belongs to the PlsX family. As to quaternary structure, homodimer. Probably interacts with PlsY.

The protein localises to the cytoplasm. It catalyses the reaction a fatty acyl-[ACP] + phosphate = an acyl phosphate + holo-[ACP]. Its pathway is lipid metabolism; phospholipid metabolism. Functionally, catalyzes the reversible formation of acyl-phosphate (acyl-PO(4)) from acyl-[acyl-carrier-protein] (acyl-ACP). This enzyme utilizes acyl-ACP as fatty acyl donor, but not acyl-CoA. In Caldanaerobacter subterraneus subsp. tengcongensis (strain DSM 15242 / JCM 11007 / NBRC 100824 / MB4) (Thermoanaerobacter tengcongensis), this protein is Phosphate acyltransferase.